The following is a 450-amino-acid chain: Four-jointed box protein 1 (450 aa).

The signal sequence occupies residues 1–28 (MGRKMRGAAAAAGLWLLALSSLLTLWGG). Disordered stretches follow at residues 36-61 (LPAS…PEPR) and 88-111 (AGAD…GLSW). Residues 93-111 (PPRRHQDDRGRHEPSGLSW) are compositionally biased toward basic and acidic residues. 2 N-linked (GlcNAc...) asparagine glycosylation sites follow: Asn248 and Asn277.

This sequence belongs to the FJX1/FJ family. Post-translationally, glycosylated. In terms of processing, undergoes proteolytic cleavage. Expressed in brain, kidney and lung. In the telencephalon, expressed in the piriform cortex, hippocampus and olfactory bulb. In the diencephalon, expressed in the dorsal thalamus. Expressed in Purkinje cells of the cerebellum and in numerous medullary nuclei.

The protein localises to the secreted. Functionally, acts as an inhibitor of dendrite extension and branching. The chain is Four-jointed box protein 1 (Fjx1) from Mus musculus (Mouse).